A 174-amino-acid chain; its full sequence is Peptide methionine sulfoxide reductase MsrA (174 aa).

Residue cysteine 10 is part of the active site.

Belongs to the MsrA Met sulfoxide reductase family.

It carries out the reaction L-methionyl-[protein] + [thioredoxin]-disulfide + H2O = L-methionyl-(S)-S-oxide-[protein] + [thioredoxin]-dithiol. It catalyses the reaction [thioredoxin]-disulfide + L-methionine + H2O = L-methionine (S)-S-oxide + [thioredoxin]-dithiol. Its function is as follows. Has an important function as a repair enzyme for proteins that have been inactivated by oxidation. Catalyzes the reversible oxidation-reduction of methionine sulfoxide in proteins to methionine. The polypeptide is Peptide methionine sulfoxide reductase MsrA (Acinetobacter baumannii (strain SDF)).